The sequence spans 155 residues: MSDYEEAFNDGNENFEDFDVEHFSDEETYEEKPQFKDGETTDANGKTIVTGGNGPEDFQQHEQIRRKTLKEKAIPKDQRATTPYMTKYERARILGTRALQISMNAPVFVDLEGETDPLRIAMKELAEKKIPLVIRRYLPDGSFEDWSVEELIVDL.

A compositionally biased stretch (acidic residues) spans 1–19 (MSDYEEAFNDGNENFEDFD). A disordered region spans residues 1-57 (MSDYEEAFNDGNENFEDFDVEHFSDEETYEEKPQFKDGETTDANGKTIVTGGNGPED). The segment covering 20–39 (VEHFSDEETYEEKPQFKDGE) has biased composition (basic and acidic residues). Residue Ser24 is modified to Phosphoserine. Residues 111 to 132 (LEGETDPLRIAMKELAEKKIPL) are leucine-zipper.

It belongs to the archaeal Rpo6/eukaryotic RPB6 RNA polymerase subunit family. In terms of assembly, component of the RNA polymerase I (Pol I), RNA polymerase II (Pol II) and RNA polymerase III (Pol III) complexes. Component of the RNA polymerase I (Pol I) complex consisting of 14 subunits: RPA135, RPA190, RPC40, RPA14, RPB5, RPO26, RPA43, RPB8, RPA12, RPB10, RPC19, RPC10, RPA49 and RPA34. The complex is composed of a horseshoe-shaped core containing ten subunits (RPA135, RPA190, RPB5, RPO26, RPB8, RPB10, RPC10, RPA12, RPC19 and RPC40) where RPA135 and RPA190 form the DNA-binding cleft. Outside of the core, RPA14 and RPA43 form the stalk that mediates interactions with transcription initiation factors and newly synthesized RNA. Component of the RNA polymerase II (Pol II) complex consisting of 12 subunits: RPO21, RPB2, RPB3, RPB4, RPB5, RPO26, RPB7, RPB8, RPB9, RPB10 and RPC10. Component of the RNA polymerase III (Pol III) complex consisting of 17 subunits.

The protein localises to the cytoplasm. The protein resides in the nucleus. Its function is as follows. DNA-dependent RNA polymerases catalyze the transcription of DNA into RNA using the four ribonucleoside triphosphates as substrates. Common component of RNA polymerases I, II and III which synthesize ribosomal RNA precursors, mRNA precursors and many functional non-coding RNAs, and small RNAs, such as 5S rRNA and tRNAs, respectively. Pol II is the central component of the basal RNA polymerase II transcription machinery. RNA polymerases are composed of mobile elements that move relative to each other. In Pol II, RPB6 is part of the clamp element and together with parts of RPB1 and RPB2 forms a pocket to which the RPB4-RPB7 subcomplex binds. The chain is DNA-directed RNA polymerases I, II, and III subunit RPABC2 (RPO26) from Saccharomyces cerevisiae (strain ATCC 204508 / S288c) (Baker's yeast).